The sequence spans 144 residues: Ribonuclease H (144 aa).

In terms of domain architecture, RNase H type-1 spans M1–D141. Residues D9, E47, D69, and D133 each contribute to the Mg(2+) site.

This sequence belongs to the RNase H family. In terms of assembly, monomer. It depends on Mg(2+) as a cofactor.

The protein localises to the cytoplasm. It catalyses the reaction Endonucleolytic cleavage to 5'-phosphomonoester.. Endonuclease that specifically degrades the RNA of RNA-DNA hybrids. The sequence is that of Ribonuclease H from Erythrobacter litoralis (strain HTCC2594).